The following is a 950-amino-acid chain: Leucine--tRNA ligase 2 (950 aa).

The 'HIGH' region motif lies at 47-57 (PYPNSPFHLGH). A 'KMSKS' region motif is present at residues 631–635 (KMSKS). Position 634 (lysine 634) interacts with ATP.

Belongs to the class-I aminoacyl-tRNA synthetase family.

The protein localises to the cytoplasm. It carries out the reaction tRNA(Leu) + L-leucine + ATP = L-leucyl-tRNA(Leu) + AMP + diphosphate. This chain is Leucine--tRNA ligase 2, found in Metallosphaera sedula (strain ATCC 51363 / DSM 5348 / JCM 9185 / NBRC 15509 / TH2).